We begin with the raw amino-acid sequence, 122 residues long: Large ribosomal subunit protein uL14c (122 aa).

It belongs to the universal ribosomal protein uL14 family. As to quaternary structure, part of the 50S ribosomal subunit.

The protein localises to the plastid. The protein resides in the chloroplast. Functionally, binds to 23S rRNA. This Morus indica (Mulberry) protein is Large ribosomal subunit protein uL14c.